The primary structure comprises 274 residues: Pantothenate synthetase (274 aa).

An ATP-binding site is contributed by 26-33 (MGNLHAGH). The active-site Proton donor is H33. Residue Q57 participates in (R)-pantoate binding. A beta-alanine-binding site is contributed by Q57. Residue 143-146 (GKKD) participates in ATP binding. Position 149 (Q149) interacts with (R)-pantoate. Residues V172 and 180–183 (LSSR) each bind ATP.

This sequence belongs to the pantothenate synthetase family. In terms of assembly, homodimer.

It is found in the cytoplasm. The catalysed reaction is (R)-pantoate + beta-alanine + ATP = (R)-pantothenate + AMP + diphosphate + H(+). It functions in the pathway cofactor biosynthesis; (R)-pantothenate biosynthesis; (R)-pantothenate from (R)-pantoate and beta-alanine: step 1/1. Functionally, catalyzes the condensation of pantoate with beta-alanine in an ATP-dependent reaction via a pantoyl-adenylate intermediate. This chain is Pantothenate synthetase, found in Dechloromonas aromatica (strain RCB).